The sequence spans 200 residues: Probable molybdenum cofactor guanylyltransferase (200 aa).

GTP is bound by residues 9–11, K21, D69, and D100; that span reads LAG. Mg(2+) is bound at residue D100.

The protein belongs to the MobA family. Mg(2+) is required as a cofactor.

It is found in the cytoplasm. The catalysed reaction is Mo-molybdopterin + GTP + H(+) = Mo-molybdopterin guanine dinucleotide + diphosphate. In terms of biological role, transfers a GMP moiety from GTP to Mo-molybdopterin (Mo-MPT) cofactor (Moco or molybdenum cofactor) to form Mo-molybdopterin guanine dinucleotide (Mo-MGD) cofactor. This Bacillus anthracis (strain CDC 684 / NRRL 3495) protein is Probable molybdenum cofactor guanylyltransferase.